The chain runs to 562 residues: Glutamyl-tRNA(Gln) amidotransferase subunit B, chloroplastic/mitochondrial (562 aa).

The interval 48-76 (SVASNSKREPRPVKTRVMTQERGSGETQT) is disordered. Polar residues predominate over residues 64–76 (VMTQERGSGETQT).

Belongs to the GatB/GatE family. GatB subfamily. Subunit of the heterotrimeric GatCAB amidotransferase (AdT) complex, composed of A, B and C subunits.

The protein resides in the mitochondrion. The protein localises to the plastid. It is found in the chloroplast. It catalyses the reaction L-glutamyl-tRNA(Gln) + L-glutamine + ATP + H2O = L-glutaminyl-tRNA(Gln) + L-glutamate + ADP + phosphate + H(+). Functionally, allows the formation of correctly charged Gln-tRNA(Gln) through the transamidation of misacylated Glu-tRNA(Gln) in chloroplasts and mitochondria. The reaction takes place in the presence of glutamine and ATP through an activated gamma-phospho-Glu-tRNA(Gln). This is Glutamyl-tRNA(Gln) amidotransferase subunit B, chloroplastic/mitochondrial from Physcomitrium patens (Spreading-leaved earth moss).